We begin with the raw amino-acid sequence, 248 residues long: Triosephosphate isomerase (248 aa).

2 residues coordinate substrate: Asn-10 and Lys-12. Catalysis depends on His-95, which acts as the Electrophile. Glu-165 functions as the Proton acceptor in the catalytic mechanism.

This sequence belongs to the triosephosphate isomerase family. Homodimer.

The catalysed reaction is D-glyceraldehyde 3-phosphate = dihydroxyacetone phosphate. Its pathway is carbohydrate biosynthesis; gluconeogenesis. The protein operates within carbohydrate degradation; glycolysis; D-glyceraldehyde 3-phosphate from glycerone phosphate: step 1/1. The chain is Triosephosphate isomerase (tpi-1) from Neurospora crassa (strain ATCC 24698 / 74-OR23-1A / CBS 708.71 / DSM 1257 / FGSC 987).